We begin with the raw amino-acid sequence, 394 residues long: Deoxyguanosinetriphosphate triphosphohydrolase-like protein (394 aa).

The segment at 1-34 is disordered; sequence MSSSPFFVPRAPYAEDPAKSRGRRFPEDESRTRT. Basic and acidic residues predominate over residues 16 to 34; the sequence is DPAKSRGRRFPEDESRTRT. Residues 70–210 enclose the HD domain; sequence RLTHSLEVAQ…AALADDIAYN (141 aa).

It belongs to the dGTPase family. Type 2 subfamily.

The protein is Deoxyguanosinetriphosphate triphosphohydrolase-like protein of Caulobacter sp. (strain K31).